The following is a 558-amino-acid chain: Transcription factor RelB (558 aa).

The span at 1-11 (MPSRRAARESA) shows a compositional bias: basic and acidic residues. The disordered stretch occupies residues 1–21 (MPSRRAARESAPELGALGSSD). S19 bears the Phosphoserine mark. The leucine-zipper stretch occupies residues 22–50 (LSSLSLTVSRTTDELEIIDEYIKENGFGL). T84 is subject to Phosphothreonine. The 316-residue stretch at 103–418 (PYLVITEQPK…ESKRRKKKPV (316 aa)) folds into the RHD domain. 2 short sequence motifs (nuclear localization signal) span residues 387–391 (KKRKR) and 411–416 (KRRKKK). Position 552 is a phosphoserine (S552).

In terms of assembly, component of the NF-kappa-B RelB-p50 complex. Component of the NF-kappa-B RelB-p52 complex. Self-associates; the interaction seems to be transient and may prevent degradation allowing for heterodimer formation p50 or p52. Interacts with NFKB1/p50, NFKB2/p52 and NFKB2/p100. Interacts with NFKBID. Interacts with BMAL1 and the interaction is enhanced in the presence of CLOCK. Post-translationally, phosphorylation at 'Thr-103' and 'Ser-573' is followed by proteasomal degradation. Expressed in intestine, thymus and spleen. Undetectable in liver, bome marrow, kidney and testis.

It localises to the nucleus. Its subcellular location is the cytoplasm. It is found in the cytoskeleton. The protein resides in the microtubule organizing center. The protein localises to the centrosome. NF-kappa-B is a pleiotropic transcription factor which is present in almost all cell types and is involved in many biological processed such as inflammation, immunity, differentiation, cell growth, tumorigenesis and apoptosis. NF-kappa-B is a homo- or heterodimeric complex formed by the Rel-like domain-containing proteins RELA/p65, RELB, NFKB1/p105, NFKB1/p50, REL and NFKB2/p52. The dimers bind at kappa-B sites in the DNA of their target genes and the individual dimers have distinct preferences for different kappa-B sites that they can bind with distinguishable affinity and specificity. Different dimer combinations act as transcriptional activators or repressors, respectively. NF-kappa-B is controlled by various mechanisms of post-translational modification and subcellular compartmentalization as well as by interactions with other cofactors or corepressors. NF-kappa-B complexes are held in the cytoplasm in an inactive state complexed with members of the NF-kappa-B inhibitor (I-kappa-B) family. In a conventional activation pathway, I-kappa-B is phosphorylated by I-kappa-B kinases (IKKs) in response to different activators, subsequently degraded thus liberating the active NF-kappa-B complex which translocates to the nucleus. NF-kappa-B heterodimeric RelB-p50 and RelB-p52 complexes are transcriptional activators. RELB neither associates with DNA nor with RELA/p65 or REL. Stimulates promoter activity in the presence of NFKB2/p49. As a member of the NUPR1/RELB/IER3 survival pathway, may allow the development of pancreatic intraepithelial neoplasias. Regulates the circadian clock by repressing the transcriptional activator activity of the CLOCK-BMAL1 heterodimer in a CRY1/CRY2 independent manner. Increased repression of the heterodimer is seen in the presence of NFKB2/p52. Is required for both T and B lymphocyte maturation and function. The chain is Transcription factor RelB (Relb) from Mus musculus (Mouse).